A 172-amino-acid chain; its full sequence is MLSWYKAQLAARPLLTQAVTTSILFGVGDVAAQQLVDRRGLSNHDLTRTGRMVLYGGAVFGPAATTWFRFLQKRVVVPGSTNKTILARVAADQGLFAPTFIGIFLGSMAVLEGTDVKEKLQKNYWEALSTNWMVWPFVQMVNFKVVPLDHRVLFVNVISIGWNCYLSWLNGQ.

The next 5 membrane-spanning stretches (helical) occupy residues Pro13–Gln33, Met52–Gln72, Gly94–Thr114, Leu128–Leu148, and Val152–Gln172.

Belongs to the peroxisomal membrane protein PXMP2/4 family.

It localises to the mitochondrion inner membrane. In terms of biological role, may be involved in cellular response to stress. Required to maintain mitochondrial DNA (mtDNA) integrity and stability. This is Protein sym-1 (sym-1) from Neurospora crassa (strain ATCC 24698 / 74-OR23-1A / CBS 708.71 / DSM 1257 / FGSC 987).